The sequence spans 488 residues: UDP-glycosyltransferase 85A3 (488 aa).

UDP-alpha-D-glucose contacts are provided by residues S306, C363–Q365, H380–E388, and F402–Q405.

Belongs to the UDP-glycosyltransferase family. Expressed in roots and flowers.

The sequence is that of UDP-glycosyltransferase 85A3 (UGT85A3) from Arabidopsis thaliana (Mouse-ear cress).